Consider the following 355-residue polypeptide: Phosphoribosylformylglycinamidine cyclo-ligase (355 aa).

This sequence belongs to the AIR synthase family.

It is found in the cytoplasm. The catalysed reaction is 2-formamido-N(1)-(5-O-phospho-beta-D-ribosyl)acetamidine + ATP = 5-amino-1-(5-phospho-beta-D-ribosyl)imidazole + ADP + phosphate + H(+). The protein operates within purine metabolism; IMP biosynthesis via de novo pathway; 5-amino-1-(5-phospho-D-ribosyl)imidazole from N(2)-formyl-N(1)-(5-phospho-D-ribosyl)glycinamide: step 2/2. This chain is Phosphoribosylformylglycinamidine cyclo-ligase, found in Paraburkholderia phymatum (strain DSM 17167 / CIP 108236 / LMG 21445 / STM815) (Burkholderia phymatum).